A 153-amino-acid chain; its full sequence is Histone H2B type W-T (153 aa).

Residues 1–54 (MATASAMAGPSSETTSEEQLITQEPKEANSTTSQKQSKQRKRGRHGPRRCHSNC) are disordered. Positions 11–36 (SSETTSEEQLITQEPKEANSTTSQKQ) are enriched in polar residues. The segment covering 37 to 52 (SKQRKRGRHGPRRCHS) has biased composition (basic residues).

The protein belongs to the histone H2B family. As to quaternary structure, can replace the conventional histone H2B in the nucleosome. The nucleosome is a histone octamer containing two molecules each of H2A, H2B, H3 and H4 assembled in one H3-H4 heterotetramer and two H2A-H2B heterodimers. The octamer wraps approximately 147 bp of DNA. In terms of tissue distribution, testis-specific (at protein level).

It is found in the nucleus membrane. It localises to the chromosome. The protein resides in the telomere. Its function is as follows. Atypical histone H2B that can form nucleosomes structurally and dynamically indistinguishable from those containing conventional H2B. Nucleosomes wrap and compact DNA into chromatin, limiting DNA accessibility to the cellular machineries which require DNA as a template. Histones thereby play a central role in transcription regulation, DNA repair, DNA replication and chromosomal stability. DNA accessibility is regulated via a complex set of post-translational modifications of histones, also called histone code, and nucleosome remodeling. However, unlike conventional H2B, does not recruit chromosome condensation factors and does not participate in the assembly of mitotic chromosomes. May be important for telomere function and play a role in spermatogenesis. This chain is Histone H2B type W-T, found in Homo sapiens (Human).